A 168-amino-acid polypeptide reads, in one-letter code: Crossover junction endodeoxyribonuclease RuvC (168 aa).

Active-site residues include D8, E68, and D140. Residues D8, E68, and D140 each contribute to the Mg(2+) site.

This sequence belongs to the RuvC family. Homodimer which binds Holliday junction (HJ) DNA. The HJ becomes 2-fold symmetrical on binding to RuvC with unstacked arms; it has a different conformation from HJ DNA in complex with RuvA. In the full resolvosome a probable DNA-RuvA(4)-RuvB(12)-RuvC(2) complex forms which resolves the HJ. Mg(2+) serves as cofactor.

Its subcellular location is the cytoplasm. The catalysed reaction is Endonucleolytic cleavage at a junction such as a reciprocal single-stranded crossover between two homologous DNA duplexes (Holliday junction).. Functionally, the RuvA-RuvB-RuvC complex processes Holliday junction (HJ) DNA during genetic recombination and DNA repair. Endonuclease that resolves HJ intermediates. Cleaves cruciform DNA by making single-stranded nicks across the HJ at symmetrical positions within the homologous arms, yielding a 5'-phosphate and a 3'-hydroxyl group; requires a central core of homology in the junction. The consensus cleavage sequence is 5'-(A/T)TT(C/G)-3'. Cleavage occurs on the 3'-side of the TT dinucleotide at the point of strand exchange. HJ branch migration catalyzed by RuvA-RuvB allows RuvC to scan DNA until it finds its consensus sequence, where it cleaves and resolves the cruciform DNA. In Lawsonia intracellularis (strain PHE/MN1-00), this protein is Crossover junction endodeoxyribonuclease RuvC.